A 292-amino-acid chain; its full sequence is BTB/POZ domain-containing protein KCTD7 (292 aa).

The interval 1–27 (MVVFSAASDSEKPGDAMSGADKGEEEY) is disordered. The region spanning 56–144 (IPLNVGGTYF…YAIGPLLENL (89 aa)) is the BTB domain.

It localises to the cell membrane. Its subcellular location is the cytoplasm. It is found in the cytosol. In Danio rerio (Zebrafish), this protein is BTB/POZ domain-containing protein KCTD7 (kctd7).